The primary structure comprises 591 residues: Aspartate--tRNA(Asp/Asn) ligase (591 aa).

Glu-176 contributes to the L-aspartate binding site. Residues 200 to 203 (QLFK) form an aspartate region. Arg-222 contacts L-aspartate. ATP-binding positions include 222 to 224 (RDE) and Gln-231. His-450 lines the L-aspartate pocket. Residue Glu-484 coordinates ATP. Arg-491 provides a ligand contact to L-aspartate. 536 to 539 (GLDR) is a binding site for ATP.

This sequence belongs to the class-II aminoacyl-tRNA synthetase family. Type 1 subfamily. Homodimer.

Its subcellular location is the cytoplasm. The enzyme catalyses tRNA(Asx) + L-aspartate + ATP = L-aspartyl-tRNA(Asx) + AMP + diphosphate. Its function is as follows. Aspartyl-tRNA synthetase with relaxed tRNA specificity since it is able to aspartylate not only its cognate tRNA(Asp) but also tRNA(Asn). Reaction proceeds in two steps: L-aspartate is first activated by ATP to form Asp-AMP and then transferred to the acceptor end of tRNA(Asp/Asn). This is Aspartate--tRNA(Asp/Asn) ligase from Bacillus thuringiensis (strain Al Hakam).